A 548-amino-acid chain; its full sequence is Fumarate hydratase class I, aerobic (548 aa).

The [4Fe-4S] cluster site is built by Cys-105, Cys-224, and Cys-318.

This sequence belongs to the class-I fumarase family. As to quaternary structure, homodimer. [4Fe-4S] cluster serves as cofactor.

The enzyme catalyses (S)-malate = fumarate + H2O. It carries out the reaction oxaloacetate = enol-oxaloacetate. It participates in carbohydrate metabolism; tricarboxylic acid cycle; (S)-malate from fumarate: step 1/1. Functionally, catalyzes the reversible hydration of fumarate to (S)-malate. Functions as an aerobic enzyme in the direction of malate formation as part of the citric acid cycle. Accounts for about 80% of the fumarase activity when the bacteria grow aerobically. To a lesser extent, also displays D-tartrate dehydratase activity in vitro, but is not able to convert (R)-malate, L-tartrate or meso-tartrate. Can also catalyze the isomerization of enol- to keto-oxaloacetate. The chain is Fumarate hydratase class I, aerobic from Escherichia coli O6:H1 (strain CFT073 / ATCC 700928 / UPEC).